A 133-amino-acid chain; its full sequence is Large ribosomal subunit protein bL17 (133 aa).

It belongs to the bacterial ribosomal protein bL17 family. In terms of assembly, part of the 50S ribosomal subunit. Contacts protein L32.

This is Large ribosomal subunit protein bL17 from Polaromonas naphthalenivorans (strain CJ2).